Consider the following 80-residue polypeptide: Serine palmitoyltransferase small subunit B (80 aa).

Topologically, residues 1 to 11 (MDVKHIKDYLS) are cytoplasmic. The helical transmembrane segment at 12–29 (WLYYQYLLITCSYVLEPW) threads the bilayer. At 30-36 (EQSIFNT) the chain is on the lumenal side. A helical membrane pass occupies residues 37 to 57 (LLLTIIAMVIYSSYIFIPIHV). At 58-80 (RLAVEFFSGIFGGQHESTVALMS) the chain is on the cytoplasmic side.

The protein belongs to the SPTSS family. SPTSSB subfamily. In terms of assembly, component of the serine palmitoyltransferase (SPT) complex, which is composed of SPTLC1, SPTLC2 or SPTLC3 and SPTSSA or SPTSSB. The heterodimer consisting of SPTLC1 and SPTLC2/SPTLC3 forms the catalytic core of the enzyme, while SPTSSA or SPTSSB subunits determine substrate specificity. SPT also interacts with ORMDL proteins, especially ORMDL3, which negatively regulate SPT activity in the presence of ceramides.

The protein localises to the endoplasmic reticulum membrane. The protein operates within lipid metabolism; sphingolipid metabolism. Functionally, component of the serine palmitoyltransferase multisubunit enzyme (SPT) that catalyzes the initial and rate-limiting step in sphingolipid biosynthesis by condensing L-serine and activated acyl-CoA (most commonly palmitoyl-CoA) to form long-chain bases. The SPT complex is composed of SPTLC1, SPTLC2 or SPTLC3 and SPTSSA or SPTSSB. Within this complex, the heterodimer consisting of SPTLC1 and SPTLC2/SPTLC3 forms the catalytic core. Within the SPT complex, SPTSSB stimulates the catalytic activity and plays a role in substrate specificity. SPT complexes with this subunit showing a preference for longer acyl-CoAs. The SPTLC1-SPTLC2-SPTSSB complex shows a strong preference for C18-CoA substrate, while the SPTLC1-SPTLC3-SPTSSB isozyme displays an ability to use a broader range of acyl-CoAs, without apparent preference. The sequence is that of Serine palmitoyltransferase small subunit B (sptssb) from Xenopus tropicalis (Western clawed frog).